The primary structure comprises 492 residues: Cytochrome P450 monooxygenase MYCFIDRAFT_204672 (492 aa).

An N-linked (GlcNAc...) asparagine glycan is attached at asparagine 116. A helical membrane pass occupies residues 269-293 (FLISMIFISAANGCVVSGAMLYSIA). A glycan (N-linked (GlcNAc...) asparagine) is linked at asparagine 335. Cysteine 430 contacts heme.

It belongs to the cytochrome P450 family. The cofactor is heme.

Its subcellular location is the membrane. It functions in the pathway secondary metabolite biosynthesis. Its function is as follows. Cytochrome P450 monooxygenase; part of the gene cluster that mediates the biosynthesis of an emodin derivative that may be involved in black Sigatoka disease of banana. The pathway begins with the synthesis of atrochrysone thioester by the polyketide synthase PKS8-1. The atrochrysone carboxyl ACP thioesterase MYCFIDRAFT_190111 then breaks the thioester bond and releases the atrochrysone carboxylic acid from PKS8-1. The decarboxylase MYCFIDRAFT_34057 then catalyzes the concerted decarboxylation-elimination required to convert atochrysone carboxylic acid into emodin anthrone, which is further oxidized to emodin by the anthrone oxygenase MYCFIDRAFT_34418. The functions of the other tailoring enzymes as well as the final product of the cluster have still to be identified. The protein is Cytochrome P450 monooxygenase MYCFIDRAFT_204672 of Pseudocercospora fijiensis (strain CIRAD86) (Black leaf streak disease fungus).